A 234-amino-acid chain; its full sequence is Triosephosphate isomerase (234 aa).

8 to 10 is a substrate binding site; the sequence is NFK. Residue H90 is the Electrophile of the active site. E159 functions as the Proton acceptor in the catalytic mechanism. Residues G165 and S197 each coordinate substrate.

The protein belongs to the triosephosphate isomerase family. In terms of assembly, homodimer.

It is found in the cytoplasm. The catalysed reaction is D-glyceraldehyde 3-phosphate = dihydroxyacetone phosphate. It participates in carbohydrate biosynthesis; gluconeogenesis. It functions in the pathway carbohydrate degradation; glycolysis; D-glyceraldehyde 3-phosphate from glycerone phosphate: step 1/1. Involved in the gluconeogenesis. Catalyzes stereospecifically the conversion of dihydroxyacetone phosphate (DHAP) to D-glyceraldehyde-3-phosphate (G3P). This is Triosephosphate isomerase from Helicobacter pylori (strain J99 / ATCC 700824) (Campylobacter pylori J99).